Here is a 320-residue protein sequence, read N- to C-terminus: Small ribosomal subunit protein uS2 (320 aa).

Residues 254–320 are disordered; sequence GDAAKAALPV…APATTGPVSE (67 aa). Positions 272-282 are enriched in basic and acidic residues; it reads VSAKNEAKSDD. Positions 308 to 320 are enriched in low complexity; sequence AEAAPATTGPVSE.

Belongs to the universal ribosomal protein uS2 family.

The polypeptide is Small ribosomal subunit protein uS2 (Clavibacter sepedonicus (Clavibacter michiganensis subsp. sepedonicus)).